The primary structure comprises 264 residues: S-adenosylmethionine decarboxylase proenzyme (264 aa).

The active-site Schiff-base intermediate with substrate; via pyruvic acid is serine 112. Serine 112 is modified (pyruvic acid (Ser); by autocatalysis). Histidine 117 acts as the Proton acceptor; for processing activity in catalysis. The Proton donor; for catalytic activity role is filled by cysteine 140.

This sequence belongs to the prokaryotic AdoMetDC family. Type 2 subfamily. In terms of assembly, heterooctamer of four alpha and four beta chains arranged as a tetramer of alpha/beta heterodimers. Pyruvate is required as a cofactor. Is synthesized initially as an inactive proenzyme. Formation of the active enzyme involves a self-maturation process in which the active site pyruvoyl group is generated from an internal serine residue via an autocatalytic post-translational modification. Two non-identical subunits are generated from the proenzyme in this reaction, and the pyruvate is formed at the N-terminus of the alpha chain, which is derived from the carboxyl end of the proenzyme. The post-translation cleavage follows an unusual pathway, termed non-hydrolytic serinolysis, in which the side chain hydroxyl group of the serine supplies its oxygen atom to form the C-terminus of the beta chain, while the remainder of the serine residue undergoes an oxidative deamination to produce ammonia and the pyruvoyl group blocking the N-terminus of the alpha chain.

The catalysed reaction is S-adenosyl-L-methionine + H(+) = S-adenosyl 3-(methylsulfanyl)propylamine + CO2. The protein operates within amine and polyamine biosynthesis; S-adenosylmethioninamine biosynthesis; S-adenosylmethioninamine from S-adenosyl-L-methionine: step 1/1. In terms of biological role, catalyzes the decarboxylation of S-adenosylmethionine to S-adenosylmethioninamine (dcAdoMet), the propylamine donor required for the synthesis of the polyamines spermine and spermidine from the diamine putrescine. This Salmonella dublin (strain CT_02021853) protein is S-adenosylmethionine decarboxylase proenzyme.